A 1263-amino-acid polypeptide reads, in one-letter code: TBC1 domain family member 9B (1263 aa).

2 GRAM domains span residues 142–209 (LKMR…EKNA) and 288–356 (ECYR…EKAD). A Phosphothreonine modification is found at Thr397. The interval 397–449 (TPSKQTGSSIGGTKASVSDPAPESLPTPQEASEPPASPSSPLSSPPSFSTQEI) is disordered. Phosphoserine is present on residues Ser412, Ser433, Ser436, and Ser464. Low complexity predominate over residues 422–447 (PTPQEASEPPASPSSPLSSPPSFSTQ). Residues 509–696 (GIPESLRGEL…VIVDCFFYEG (188 aa)) enclose the Rab-GAP TBC domain. The helical transmembrane segment at 669–689 (LSWFLTLFLSVMPFESAVVIV) threads the bilayer. Residues 880 to 915 (HTPVLAGRMFRLLDQNKDSLINFKEFVTGMSGMYHG) form the EF-hand domain. Disordered regions lie at residues 977–1002 (EQQE…PDYR), 1075–1126 (TTKK…SGDM), and 1139–1159 (VEGG…DDET). The segment covering 987 to 1002 (TPERREEKGTSPPDYR) has biased composition (basic and acidic residues). Ser1254 is subject to Phosphoserine.

It is found in the membrane. Functionally, may act as a GTPase-activating protein for Rab family protein(s). The sequence is that of TBC1 domain family member 9B (Tbc1d9b) from Mus musculus (Mouse).